The chain runs to 432 residues: Enolase (432 aa).

Gln164 provides a ligand contact to (2R)-2-phosphoglycerate. Catalysis depends on Glu206, which acts as the Proton donor. Residues Asp243, Glu289, and Asp316 each contribute to the Mg(2+) site. Residues Lys341, Arg370, Ser371, and Lys392 each coordinate (2R)-2-phosphoglycerate. Residue Lys341 is the Proton acceptor of the active site.

It belongs to the enolase family. Mg(2+) serves as cofactor.

Its subcellular location is the cytoplasm. It localises to the secreted. The protein localises to the cell surface. The catalysed reaction is (2R)-2-phosphoglycerate = phosphoenolpyruvate + H2O. It functions in the pathway carbohydrate degradation; glycolysis; pyruvate from D-glyceraldehyde 3-phosphate: step 4/5. In terms of biological role, catalyzes the reversible conversion of 2-phosphoglycerate (2-PG) into phosphoenolpyruvate (PEP). It is essential for the degradation of carbohydrates via glycolysis. The polypeptide is Enolase (Borrelia duttonii (strain Ly)).